A 730-amino-acid polypeptide reads, in one-letter code: Catalase R (730 aa).

The active site involves His105. Residue Tyr392 participates in heme binding. The segment at 403–433 (PNFEQIPVNRPRKPVHNNNRDGFGQQQIPTN) is disordered.

This sequence belongs to the catalase family. Heme is required as a cofactor.

It catalyses the reaction 2 H2O2 = O2 + 2 H2O. Occurs in almost all aerobically respiring organisms and serves to protect cells from the toxic effects of hydrogen peroxide. This is Catalase R (catR) from Aspergillus niger.